The sequence spans 104 residues: Meiotically up-regulated gene 150 protein (104 aa).

The next 3 helical transmembrane spans lie at F30–I50, T54–F74, and L84–I104.

The protein localises to the endoplasmic reticulum membrane. Its function is as follows. Has a role in meiosis. This is Meiotically up-regulated gene 150 protein (mug150) from Schizosaccharomyces pombe (strain 972 / ATCC 24843) (Fission yeast).